A 333-amino-acid chain; its full sequence is DnaJ homolog subfamily C member 25 homolog (333 aa).

The chain crosses the membrane as a helical span at residues 8-28 (LVLLALLPTMALGLLEGLYCG). Residues 31 to 99 (NCYDVLGVTR…ESRTDYDYML (69 aa)) enclose the J domain. A helical transmembrane segment spans residues 123–143 (VRVVIVVVLTIVSVIQYYSGW). The stretch at 158–208 (KYRNQALEIARDEIQEKIQKKGKNRMSKNDQRDELERIIRRVIEEKMDVKG) forms a coiled coil. Residues 218–238 (VLWVQLIICPYTILSFIVWHA) form a helical membrane-spanning segment.

Belongs to the DNAJC25 family.

The protein localises to the membrane. The polypeptide is DnaJ homolog subfamily C member 25 homolog (Drosophila melanogaster (Fruit fly)).